The following is a 251-amino-acid chain: tRNA-uridine aminocarboxypropyltransferase 2 (251 aa).

Cys23, Cys26, Cys33, and Cys35 together coordinate Zn(2+). Residues 131 to 134 (DGTW) carry the DXTW motif.

This sequence belongs to the TDD superfamily. DTWD2 family.

The catalysed reaction is a uridine in tRNA + S-adenosyl-L-methionine = a 3-[(3S)-3-amino-3-carboxypropyl]uridine in tRNA + S-methyl-5'-thioadenosine + H(+). Functionally, catalyzes the formation of 3-(3-amino-3-carboxypropyl)uridine (acp3U) at position 20a in the D-loop of several cytoplasmic tRNAs (acp3U(20a)). This is tRNA-uridine aminocarboxypropyltransferase 2 from Drosophila melanogaster (Fruit fly).